The following is a 140-amino-acid chain: MLKTISPLISPELLKVLAEMGHGDEIIFSDAHFPAHSMGPQVIRADGLRVSDLLQAIIPLFELDSYAPPLVMMAAVEGDALDPTVEQCYRQALSAQAPCPDIVRIDRFAFYDRAQKAFAIVITGERAKYGNILLKKGVTP.

Histidine 22 serves as the catalytic Proton donor. Residues aspartate 30, arginine 107, and 129-131 each bind substrate; that span reads YGN.

This sequence belongs to the RbsD / FucU family. FucU mutarotase subfamily. As to quaternary structure, homodecamer.

The protein localises to the cytoplasm. It carries out the reaction alpha-L-fucose = beta-L-fucose. It functions in the pathway carbohydrate metabolism; L-fucose metabolism. Its function is as follows. Involved in the anomeric conversion of L-fucose. This is L-fucose mutarotase from Klebsiella pneumoniae (strain 342).